Consider the following 84-residue polypeptide: Large ribosomal subunit protein bL27 (84 aa).

The segment at 1 to 24 is disordered; sequence MAHKKGGGSSKNGRDSNSQRLGVK.

This sequence belongs to the bacterial ribosomal protein bL27 family.

This Leptospira borgpetersenii serovar Hardjo-bovis (strain JB197) protein is Large ribosomal subunit protein bL27.